The sequence spans 446 residues: Keratin, type I cytoskeletal 25 (446 aa).

The segment at 1-74 (MSLRLSSGSR…VNEGGLLSGN (74 aa)) is head. The segment at 75-110 (EKVTMQNLNDRLASYLDNVQALQEANADLEQKIKGW) is coil 1A. The 316-residue stretch at 75-390 (EKVTMQNLND…LLIGGDEGAC (316 aa)) folds into the IF rod domain. Positions 111-132 (YEKFGPGSCRGLDHDYSRYFPI) are linker 1. The coil 1B stretch occupies residues 133–224 (IDDLKNQIIT…KNHKEEMQAL (92 aa)). The segment at 225–247 (QCAAGGNVNVEMNAAPGVDLTVL) is linker 12. The interval 248–386 (LNNMRAEYEA…ETYCLLIGGD (139 aa)) is coil 2. The tract at residues 387 to 446 (EGACKSSSYKSKDYGSGNAGNQIKDPVKAIVVKKVLEEVDQRSKILTTRLHSLEEKSQSN) is tail. Residue Ser438 is modified to Phosphoserine.

The protein belongs to the intermediate filament family. Heterodimer of a type I and a type II keratin. Heterodimer with type II keratin KRT5 leading to the formation of keratin intermediate filament (KIF) network. Interacts with KRT6A to form filaments.

It is found in the cytoplasm. Its function is as follows. Essential for the proper assembly of type I and type II keratin protein complexes and formation of keratin intermediate filaments in the inner root sheath (irs). Plays a role in the cytoskeleton organization. The protein is Keratin, type I cytoskeletal 25 of Mus musculus (Mouse).